Consider the following 698-residue polypeptide: Macrophomene synthase (698 aa).

Residues 21 to 340 (MEYMYSVPLD…SCDRYSSYRR (320 aa)) form a terpene cyclase region. Residue Asp113 participates in Mg(2+) binding. Residues 113–117 (DNIAE) carry the DDXXD 1 motif. The short motif at 242–250 (NDFFSFNYE) is the NSE/DTE element. The interval 341–696 (EKHQMELPIR…IQLALERLRI (356 aa)) is prenyltransferase. Residues 368–387 (LPNGKQLDAPTESSGKDLSD) are disordered. Isopentenyl diphosphate-binding residues include Lys417, Arg420, and His449. Asp456 and Asp460 together coordinate Mg(2+). A DDXXD 2 motif is present at residues 456 to 460 (DDIED). Residue Arg465 participates in dimethylallyl diphosphate binding. Arg466 provides a ligand contact to isopentenyl diphosphate. Dimethylallyl diphosphate contacts are provided by Lys543, Thr544, Gln579, Asn586, Lys596, and Lys606.

In the N-terminal section; belongs to the terpene synthase family. The protein in the C-terminal section; belongs to the FPP/GGPP synthase family. Hexamer. Mg(2+) is required as a cofactor.

It carries out the reaction 5 isopentenyl diphosphate + dimethylallyl diphosphate = all-trans-hexaprenyl diphosphate + 5 diphosphate. The catalysed reaction is all-trans-hexaprenyl diphosphate = macrophomene + diphosphate. Its function is as follows. Bifunctional terpene synthase that converts dimethylallyl diphosphate (DMAPP) and isopentenyl diphosphate (IPP) into macrophomene as a single product. The C-terminal prenyltransferase (PT) domain of MpMS catalyzes formation of hexaprenyl diphosphate (HexPP), whereas the N-terminal terpene cyclase (TC) domain catalyzes the cyclization of HexPP to macrophomene. This chain is Macrophomene synthase, found in Macrophomina phaseolina (strain MS6) (Charcoal rot fungus).